A 96-amino-acid chain; its full sequence is NADH-ubiquinone oxidoreductase chain 4L (96 aa).

Transmembrane regions (helical) follow at residues Met-1–Gln-21, Leu-24–Ile-44, and Leu-57–Val-77.

It belongs to the complex I subunit 4L family.

The protein resides in the mitochondrion membrane. It carries out the reaction a ubiquinone + NADH + 5 H(+)(in) = a ubiquinol + NAD(+) + 4 H(+)(out). Functionally, core subunit of the mitochondrial membrane respiratory chain NADH dehydrogenase (Complex I) which catalyzes electron transfer from NADH through the respiratory chain, using ubiquinone as an electron acceptor. Part of the enzyme membrane arm which is embedded in the lipid bilayer and involved in proton translocation. The protein is NADH-ubiquinone oxidoreductase chain 4L (MT-ND4L) of Myxine glutinosa (Atlantic hagfish).